A 336-amino-acid chain; its full sequence is tRNA N6-adenosine threonylcarbamoyltransferase (336 aa).

Histidine 112 and histidine 116 together coordinate Fe cation. Substrate is bound by residues 136 to 140 (LVSGG), aspartate 169, glycine 182, and asparagine 276. Residue aspartate 304 coordinates Fe cation.

The protein belongs to the KAE1 / TsaD family. Requires Fe(2+) as cofactor.

It localises to the cytoplasm. It catalyses the reaction L-threonylcarbamoyladenylate + adenosine(37) in tRNA = N(6)-L-threonylcarbamoyladenosine(37) in tRNA + AMP + H(+). Its function is as follows. Required for the formation of a threonylcarbamoyl group on adenosine at position 37 (t(6)A37) in tRNAs that read codons beginning with adenine. Is involved in the transfer of the threonylcarbamoyl moiety of threonylcarbamoyl-AMP (TC-AMP) to the N6 group of A37, together with TsaE and TsaB. TsaD likely plays a direct catalytic role in this reaction. This chain is tRNA N6-adenosine threonylcarbamoyltransferase, found in Francisella tularensis subsp. holarctica (strain FTNF002-00 / FTA).